Consider the following 418-residue polypeptide: Serine hydroxymethyltransferase (418 aa).

Residues leucine 121 and 125-127 (GHL) contribute to the (6S)-5,6,7,8-tetrahydrofolate site. Lysine 230 bears the N6-(pyridoxal phosphate)lysine mark. A (6S)-5,6,7,8-tetrahydrofolate-binding site is contributed by 355 to 357 (SPF).

The protein belongs to the SHMT family. Homodimer. It depends on pyridoxal 5'-phosphate as a cofactor.

Its subcellular location is the cytoplasm. It carries out the reaction (6R)-5,10-methylene-5,6,7,8-tetrahydrofolate + glycine + H2O = (6S)-5,6,7,8-tetrahydrofolate + L-serine. It participates in one-carbon metabolism; tetrahydrofolate interconversion. The protein operates within amino-acid biosynthesis; glycine biosynthesis; glycine from L-serine: step 1/1. In terms of biological role, catalyzes the reversible interconversion of serine and glycine with tetrahydrofolate (THF) serving as the one-carbon carrier. This reaction serves as the major source of one-carbon groups required for the biosynthesis of purines, thymidylate, methionine, and other important biomolecules. Also exhibits THF-independent aldolase activity toward beta-hydroxyamino acids, producing glycine and aldehydes, via a retro-aldol mechanism. In Alcanivorax borkumensis (strain ATCC 700651 / DSM 11573 / NCIMB 13689 / SK2), this protein is Serine hydroxymethyltransferase.